The following is a 705-amino-acid chain: Probable E3 ubiquitin-protein ligase MID2 (705 aa).

The RING-type zinc-finger motif lies at 30–80 (CPICLELFEDPLLLPCAHSLCFSCAHRILVSSCSSGESIEPITAFQCPTCR). The B box-type 1; degenerate zinc-finger motif lies at 137–184 (IACQFCEQDPPRDAVKTCITCEVSYCDRCLRATHPNKKPFTSHRLVEP). The segment at 190–232 (LRGITCLDHENEKVNMYCVSDDQLICALCKLVGRHRDHQVASL) adopts a B box-type 2 zinc-finger fold. Residues Cys195, His198, Cys218, and His224 each coordinate Zn(2+). The stretch at 233-301 (NDRFEKLKQT…IIQQRKQMIA (69 aa)) forms a coiled coil. In terms of domain architecture, COS spans 340 to 399 (LKENDQARFLQSAKNIAERVAMATASSQVLIPDINFNDAFENFALDFSREKKLLEGLDYL). The 101-residue stretch at 404-504 (PPSIREELCT…EPTRLKTNSQ (101 aa)) folds into the Fibronectin type-III domain. The B30.2/SPRY domain maps to 486-679 (INQAGSRNSE…ILSGLPAPDF (194 aa)).

Belongs to the TRIM/RBCC family. In terms of assembly, homodimer or heterodimer with MID1. Interacts with IGBP1. Phosphorylated on serine and threonine residues. In terms of tissue distribution, low abundance in brain and lung, with even lower levels in heart, liver, and kidney.

The protein localises to the cytoplasm. It localises to the cytoskeleton. The enzyme catalyses S-ubiquitinyl-[E2 ubiquitin-conjugating enzyme]-L-cysteine + [acceptor protein]-L-lysine = [E2 ubiquitin-conjugating enzyme]-L-cysteine + N(6)-ubiquitinyl-[acceptor protein]-L-lysine.. The protein operates within protein modification; protein ubiquitination. Its function is as follows. E3 ubiquitin ligase that plays a role in microtubule stabilization. Mediates the 'Lys-48'-linked polyubiquitination of LRRK2 to drive its localization to microtubules and its proteasomal degradation in neurons. This ubiquitination inhibits LRRK2 kinase activation by RAB29. The chain is Probable E3 ubiquitin-protein ligase MID2 (Mid2) from Mus musculus (Mouse).